Here is a 94-residue protein sequence, read N- to C-terminus: MCGDQSDHVLQHWTVDISIDEHEGLTRAKARLRWREKELVGVGLARLNPADRNVPEIGDELSVARALSDLGKRMLKVSTHDIEAVTHQPARLLY.

This sequence to M.tuberculosis Rv2632c.

This is an uncharacterized protein from Mycobacterium tuberculosis (strain CDC 1551 / Oshkosh).